The primary structure comprises 323 residues: tRNA U34 carboxymethyltransferase (323 aa).

Carboxy-S-adenosyl-L-methionine-binding positions include lysine 91, tryptophan 105, lysine 110, glycine 130, 152–154 (DPT), 181–182 (IE), methionine 196, tyrosine 200, and arginine 315.

The protein belongs to the class I-like SAM-binding methyltransferase superfamily. CmoB family. Homotetramer.

The enzyme catalyses carboxy-S-adenosyl-L-methionine + 5-hydroxyuridine(34) in tRNA = 5-carboxymethoxyuridine(34) in tRNA + S-adenosyl-L-homocysteine + H(+). Functionally, catalyzes carboxymethyl transfer from carboxy-S-adenosyl-L-methionine (Cx-SAM) to 5-hydroxyuridine (ho5U) to form 5-carboxymethoxyuridine (cmo5U) at position 34 in tRNAs. This is tRNA U34 carboxymethyltransferase from Salmonella paratyphi A (strain ATCC 9150 / SARB42).